The sequence spans 349 residues: Isopentenyl-diphosphate delta-isomerase (349 aa).

R9 to K10 is a binding site for substrate. Residues A65–T67, S95, and N124 contribute to the FMN site. S95–H97 contacts substrate. Q154 contributes to the substrate binding site. Position 155 (E155) interacts with Mg(2+). Residues K186, S211, T216, G262–R264, and S283–R284 contribute to the FMN site.

The protein belongs to the IPP isomerase type 2 family. Homooctamer. Dimer of tetramers. FMN is required as a cofactor. Requires NADPH as cofactor. The cofactor is Mg(2+).

The protein resides in the cytoplasm. It carries out the reaction isopentenyl diphosphate = dimethylallyl diphosphate. Functionally, involved in the biosynthesis of isoprenoids. Catalyzes the 1,3-allylic rearrangement of the homoallylic substrate isopentenyl (IPP) to its allylic isomer, dimethylallyl diphosphate (DMAPP). The chain is Isopentenyl-diphosphate delta-isomerase from Staphylococcus aureus (strain USA300 / TCH1516).